A 124-amino-acid chain; its full sequence is Small ribosomal subunit protein uS13 (124 aa).

Residues 103-117 show a composition bias toward basic residues; sequence KCNARTRKGPRKTVA. The tract at residues 103–124 is disordered; sequence KCNARTRKGPRKTVANKKIETK.

It belongs to the universal ribosomal protein uS13 family. As to quaternary structure, part of the 30S ribosomal subunit. Forms a loose heterodimer with protein S19. Forms two bridges to the 50S subunit in the 70S ribosome.

Located at the top of the head of the 30S subunit, it contacts several helices of the 16S rRNA. In the 70S ribosome it contacts the 23S rRNA (bridge B1a) and protein L5 of the 50S subunit (bridge B1b), connecting the 2 subunits; these bridges are implicated in subunit movement. Contacts the tRNAs in the A and P-sites. This is Small ribosomal subunit protein uS13 from Malacoplasma penetrans (strain HF-2) (Mycoplasma penetrans).